We begin with the raw amino-acid sequence, 179 residues long: uncharacterized protein (179 aa).

4 consecutive transmembrane segments (helical) span residues 33-53 (HIIA…VILD), 63-83 (VMFI…MLVL), 89-109 (ITAS…FVLT), and 115-135 (FSPF…EYFF).

The protein resides in the cell membrane. This is an uncharacterized protein from Bacillus subtilis (strain 168).